Consider the following 914-residue polypeptide: MVQRMWAEAAGPAGGAEPLFPGSRRSRSVWDAVRLEVGVPDSCPVVLHSFTQLDPDLPRPESSTQEIGEELINGVIYSISLRKVQLHHGGNKGQRWLGYENESALNLYETCKVRTVKAGTLEKLVEHLVPAFQGSDLSYVTIFLCTYRAFTTTQQVLDLLFKRYGRCDALTASSRYGCILPYSDEDGGPQDQLKNAISSILGTWLDQYSEDFCQPPDFPCLKQLVAYVQLNMPGSDLERRAHLLLAQLEHSEPIEAEPEALSPVPALKPTPELELALTPARAPSPVPAPAPEPEPAPTPAPGSELEVAPAPAPELQQAPEPAVGLESAPAPALELEPAPEQDPAPSQTLELEPAPAPVPSLQPSWPSPVVAENGLSEEKPHLLVFPPDLVAEQFTLMDAELFKKVVPYHCLGSIWSQRDKKGKEHLAPTIRATVTQFNSVANCVITTCLGNRSTKAPDRARVVEHWIEVARECRILKNFSSLYAILSALQSNSIHRLKKTWEDVSRDSFRIFQKLSEIFSDENNYSLSRELLIKEGTSKFATLEMNPKRAQKRPKETGIIQGTVPYLGTFLTDLVMLDTAMKDYLYGRLINFEKRRKEFEVIAQIKLLQSACNNYSIAPDEQFGAWFRAVERLSETESYNLSCELEPPSESASNTLRTKKNTAIVKRWSDRQAPSTELSTSGSSHSKSCDQLRCGPYLSSGDIADALSVHSAGSSSSDVEEINISFVPESPDGQEKKFWESASQSSPETSGISSASSSTSSSSASTTPVAATRTHKRSVSGLCNSSSALPLYNQQVGDCCIIRVSLDVDNGNMYKSILVTSQDKAPAVIRKAMDKHNLEEEEPEDYELLQILSDDRKLKIPENANVFYAMNSTANYDFVLKKRTFTKGVKVKHGASSTLPRMKQKGLKIAKGIF.

The N-terminal Ras-GEF domain maps to 112–249 (KVRTVKAGTL…RAHLLLAQLE (138 aa)). Residues 280-365 (ARAPSPVPAP…APVPSLQPSW (86 aa)) form a disordered region. Positions 282 to 300 (APSPVPAPAPEPEPAPTPA) are enriched in pro residues. Residues 304–338 (ELEVAPAPAPELQQAPEPAVGLESAPAPALELEPA) are compositionally biased toward low complexity. Residues 386 to 648 (PPDLVAEQFT…YNLSCELEPP (263 aa)) enclose the Ras-GEF domain. Disordered stretches follow at residues 666–689 (KRWS…SKSC) and 728–776 (PESP…RTHK). 2 stretches are compositionally biased toward low complexity: residues 675–686 (STELSTSGSSHS) and 745–772 (SSPE…VAAT). The region spanning 798 to 885 (DCCIIRVSLD…YDFVLKKRTF (88 aa)) is the Ras-associating domain. A Phosphotyrosine; by MET modification is found at tyrosine 814.

In terms of assembly, interacts with RIT1 and RIT2. Interacts with OOG1. Interacts with TRAF3. Interacts with HRAS. In terms of processing, phosphorylation of Tyr-814 by MET blocks HRAS binding.

It is found in the cytoplasm. Its subcellular location is the nucleus. Its function is as follows. Functions as a guanine nucleotide exchange factor (GEF) activating either RalA or RalB GTPases and plays an important role in intracellular transport. Interacts and acts as an effector molecule for R-Ras, H-Ras, K-Ras, and Rap. During bacterial clearance, recognizes 'Lys-33'-linked polyubiquitinated TRAF3 and subsequently mediates assembly of the exocyst complex. The chain is Ral guanine nucleotide dissociation stimulator (RALGDS) from Homo sapiens (Human).